The chain runs to 459 residues: Cysteine--tRNA ligase (459 aa).

C29 lines the Zn(2+) pocket. Positions 31–41 (MTVYDLCHLGH) match the 'HIGH' region motif. Residues C213, H238, and E242 each contribute to the Zn(2+) site. A 'KMSKS' region motif is present at residues 270–274 (KMSKS). An ATP-binding site is contributed by K273.

This sequence belongs to the class-I aminoacyl-tRNA synthetase family. As to quaternary structure, monomer. Zn(2+) is required as a cofactor.

The protein localises to the cytoplasm. The enzyme catalyses tRNA(Cys) + L-cysteine + ATP = L-cysteinyl-tRNA(Cys) + AMP + diphosphate. In Variovorax paradoxus (strain S110), this protein is Cysteine--tRNA ligase.